Reading from the N-terminus, the 157-residue chain is Endoribonuclease YbeY (157 aa).

Zn(2+)-binding residues include histidine 122, histidine 126, and histidine 132.

It belongs to the endoribonuclease YbeY family. Requires Zn(2+) as cofactor.

The protein localises to the cytoplasm. In terms of biological role, single strand-specific metallo-endoribonuclease involved in late-stage 70S ribosome quality control and in maturation of the 3' terminus of the 16S rRNA. The polypeptide is Endoribonuclease YbeY (Bacillus velezensis (strain DSM 23117 / BGSC 10A6 / LMG 26770 / FZB42) (Bacillus amyloliquefaciens subsp. plantarum)).